Reading from the N-terminus, the 196-residue chain is Mediator of RNA polymerase II transcription subunit 21 (196 aa).

A disordered region spans residues 52–111; it reads KIPKNASTPPVPASAPQAAQSQSQASPPPPDTANPQTGGQHADQQQQSPDGEGLPAPDSP. 2 stretches are compositionally biased toward low complexity: residues 65-76 and 87-98; these read SAPQAAQSQSQA and QTGGQHADQQQQ. A coiled-coil region spans residues 144-174; the sequence is SSEAEQERRIRELEGELRIVEGVREERRREL.

It belongs to the Mediator complex subunit 21 family. As to quaternary structure, component of the Mediator complex.

The protein localises to the nucleus. Its function is as follows. Component of the Mediator complex, a coactivator involved in the regulated transcription of nearly all RNA polymerase II-dependent genes. Mediator functions as a bridge to convey information from gene-specific regulatory proteins to the basal RNA polymerase II transcription machinery. Mediator is recruited to promoters by direct interactions with regulatory proteins and serves as a scaffold for the assembly of a functional preinitiation complex with RNA polymerase II and the general transcription factors. The sequence is that of Mediator of RNA polymerase II transcription subunit 21 (srb7) from Aspergillus niger (strain ATCC MYA-4892 / CBS 513.88 / FGSC A1513).